A 335-amino-acid polypeptide reads, in one-letter code: Prepilin leader peptidase/N-methyltransferase (335 aa).

A helical membrane pass occupies residues 13-33 (LFAVFLFVLGLCVGSFLNVVI). Positions 49, 52, 74, and 77 each coordinate Zn(2+). Helical transmembrane passes span 105–125 (WTYE…LAFI), 131–151 (ILPL…AFPL), 206–226 (LLGV…LMLL), 258–278 (PGLP…VQPI), and 299–319 (IPFG…GPWL).

It belongs to the peptidase A24 family. Requires Zn(2+) as cofactor.

The protein resides in the cell inner membrane. It catalyses the reaction Typically cleaves a -Gly-|-Phe- bond to release an N-terminal, basic peptide of 5-8 residues from type IV prepilin, and then N-methylates the new N-terminal amino group, the methyl donor being S-adenosyl-L-methionine.. Functionally, plays an essential role in type IV pili and type II pseudopili formation by proteolytically removing the leader sequence from substrate proteins and subsequently monomethylating the alpha-amino group of the newly exposed N-terminal phenylalanine. In Myxococcus xanthus (strain DK1622), this protein is Prepilin leader peptidase/N-methyltransferase (pilD).